Here is a 152-residue protein sequence, read N- to C-terminus: Melatonin receptor type 1B (152 aa).

At 1–12 (HSFVYEKLFSLW) the chain is on the cytoplasmic side. A helical transmembrane segment spans residues 13-33 (NTILYVCLIWTLTVVATVPNF). The Extracellular segment spans residues 34-57 (FVGSLEYDPRIYSCTFVQTVSSSY). The helical transmembrane segment at 58–78 (TITVVVIHFILPITVVTFCYL) threads the bilayer. Residues 79 to 110 (RIWILVIQVRRKVKSEFKPRMKQSDFRNFLTM) lie on the Cytoplasmic side of the membrane. Residues 111 to 131 (FVVFVIFAFCWAPLNFIGLAV) form a helical membrane-spanning segment. Residues 132 to 144 (SINPTEVAPKIPE) are Extracellular-facing. Residues 145-152 (WLFVVSYF) form a helical membrane-spanning segment.

Belongs to the G-protein coupled receptor 1 family.

The protein localises to the cell membrane. Functionally, high affinity receptor for melatonin. The activity of this receptor is mediated by pertussis toxin sensitive G proteins that inhibits adenylate cyclase activity. The sequence is that of Melatonin receptor type 1B (mtnr1b) from Xenopus laevis (African clawed frog).